The sequence spans 382 residues: Na(+)/H(+) antiporter NhaA 2 (382 aa).

The next 11 helical transmembrane spans lie at 8 to 28 (FFSS…AAII), 49 to 69 (LSVE…MVGL), 87 to 107 (ALPG…YVWF), 115 to 135 (LAGW…VLAL), 146 to 166 (IFLS…IALF), 169 to 189 (SNIS…LFIM), 209 to 229 (FFML…ALFI), 252 to 272 (WVTF…ALSG), 286 to 306 (VALG…LLAV), 325 to 345 (VSVL…LAFA), and 353 to 373 (EVKV…MLIL).

The protein belongs to the NhaA Na(+)/H(+) (TC 2.A.33) antiporter family.

It localises to the cell inner membrane. The catalysed reaction is Na(+)(in) + 2 H(+)(out) = Na(+)(out) + 2 H(+)(in). In terms of biological role, na(+)/H(+) antiporter that extrudes sodium in exchange for external protons. The sequence is that of Na(+)/H(+) antiporter NhaA 2 from Klebsiella pneumoniae subsp. pneumoniae (strain ATCC 700721 / MGH 78578).